The chain runs to 802 residues: Ribosomal protein S6 kinase alpha-5 (802 aa).

Residues 1-22 (MEEEGGSSGGAAGTSADGGDGG) are compositionally biased toward gly residues. The interval 1–23 (MEEEGGSSGGAAGTSADGGDGGE) is disordered. Residues 49–318 (FELLKVLGTG…ADEIKEHLFF (270 aa)) enclose the Protein kinase 1 domain. ATP contacts are provided by residues 55-63 (LGTGAYGKV) and Lys81. Catalysis depends on Asp177, which acts as the Proton acceptor. At Ser212 the chain carries Phosphoserine; by autocatalysis. An AGC-kinase C-terminal domain is found at 319 to 387 (QKINWDDLAA…VAPSILFKRN (69 aa)). Ser360 is subject to Phosphoserine; by MAPK1, MAPK3 and MAPK14. Phosphoserine; by autocatalysis occurs at positions 376 and 381. In terms of domain architecture, Protein kinase 2 spans 426–687 (DLKDKPLGEG…MSGLRYNEWL (262 aa)). Residues 432–440 (LGEGSFSIC) and Lys455 each bind ATP. Residue Asp544 is the Proton acceptor of the active site. Residue Thr581 is modified to Phosphothreonine; by MAPK1, MAPK3 and MAPK14. Phosphoserine occurs at positions 647, 657, 691, and 695. Thr700 carries the post-translational modification Phosphothreonine; by MAPK1, MAPK3 and MAPK14. The disordered stretch occupies residues 741–802 (AKRRKMKKTS…TLFQFSDSVA (62 aa)). A compositionally biased stretch (low complexity) spans 749 to 779 (TSTSTETRSSSSESSHSSSSHSHGKTTPTKT). Residues Ser750, Ser752, and Ser758 each carry the phosphoserine; by autocatalysis modification. A compositionally biased stretch (polar residues) spans 780–802 (LQPSNPADSNNPETLFQFSDSVA). Ser798 is subject to Phosphoserine.

The protein belongs to the protein kinase superfamily. AGC Ser/Thr protein kinase family. S6 kinase subfamily. Forms a complex with either MAPK1/ERK2 or MAPK3/ERK1 in quiescent cells which transiently dissociates following mitogenic stimulation. Also associates with MAPK14/p38-alpha. Activated RPS6KA5 associates with and phosphorylates the NF-kappa-B p65 subunit RELA. Interacts with CREBBP and EP300. It depends on Mg(2+) as a cofactor. Ser-376 and Thr-581 phosphorylation is required for kinase activity. Ser-376 and Ser-212 are autophosphorylated by the C-terminal kinase domain, and their phosphorylation is essential for the catalytic activity of the N-terminal kinase domain. Phosphorylated at Ser-360, Thr-581 and Thr-700 by MAPK1/ERK2, MAPK3/ERK1 and MAPK14/p38-alpha. Autophosphorylated at Ser-750, Ser-752 and Ser-758 by the N-terminal kinase domain. Post-translationally, ubiquitinated.

It is found in the nucleus. It catalyses the reaction L-seryl-[protein] + ATP = O-phospho-L-seryl-[protein] + ADP + H(+). The catalysed reaction is L-threonyl-[protein] + ATP = O-phospho-L-threonyl-[protein] + ADP + H(+). Activated by phosphorylation at Ser-360, Thr-581 and Thr-700 by MAPK1/ERK2, MAPK3/ERK1 and MAPK14/p38-alpha, and by further autophosphorylation of Ser-212, Ser-376 and Ser-381 by the activated C-terminal kinase domain. The active N-terminal kinase domain finally phosphorylates downstream substrates, as well as Ser-750, Ser-752 and Ser-758 in its own C-terminal region. Functionally, serine/threonine-protein kinase that is required for the mitogen or stress-induced phosphorylation of the transcription factors CREB1 and ATF1 and for the regulation of the transcription factors RELA, STAT3 and ETV1/ER81, and that contributes to gene activation by histone phosphorylation and functions in the regulation of inflammatory genes. Phosphorylates CREB1 and ATF1 in response to mitogenic or stress stimuli such as UV-C irradiation, epidermal growth factor (EGF) and anisomycin. Plays an essential role in the control of RELA transcriptional activity in response to TNF and upon glucocorticoid, associates in the cytoplasm with the glucocorticoid receptor NR3C1 and contributes to RELA inhibition and repression of inflammatory gene expression. In skeletal myoblasts is required for phosphorylation of RELA at 'Ser-276' during oxidative stress. In erythropoietin-stimulated cells, is necessary for the 'Ser-727' phosphorylation of STAT3 and regulation of its transcriptional potential. Phosphorylates ETV1/ER81 at 'Ser-191' and 'Ser-216', and thereby regulates its ability to stimulate transcription, which may be important during development and breast tumor formation. Directly represses transcription via phosphorylation of 'Ser-1' of histone H2A. Phosphorylates 'Ser-10' of histone H3 in response to mitogenics, stress stimuli and EGF, which results in the transcriptional activation of several immediate early genes, including proto-oncogenes c-fos/FOS and c-jun/JUN. May also phosphorylate 'Ser-28' of histone H3. Mediates the mitogen- and stress-induced phosphorylation of high mobility group protein 1 (HMGN1/HMG14). In lipopolysaccharide-stimulated primary macrophages, acts downstream of the Toll-like receptor TLR4 to limit the production of pro-inflammatory cytokines. Functions probably by inducing transcription of the MAP kinase phosphatase DUSP1 and the anti-inflammatory cytokine interleukin 10 (IL10), via CREB1 and ATF1 transcription factors. Plays a role in neuronal cell death by mediating the downstream effects of excitotoxic injury. Phosphorylates TRIM7 at 'Ser-107' in response to growth factor signaling via the MEK/ERK pathway, thereby stimulating its ubiquitin ligase activity. This is Ribosomal protein S6 kinase alpha-5 (RPS6KA5) from Pongo abelii (Sumatran orangutan).